The chain runs to 259 residues: Deoxyribose-phosphate aldolase (259 aa).

The active-site Proton donor/acceptor is D102. Residue K167 is the Schiff-base intermediate with acetaldehyde of the active site. K201 (proton donor/acceptor) is an active-site residue.

It belongs to the DeoC/FbaB aldolase family. DeoC type 2 subfamily.

Its subcellular location is the cytoplasm. It catalyses the reaction 2-deoxy-D-ribose 5-phosphate = D-glyceraldehyde 3-phosphate + acetaldehyde. The protein operates within carbohydrate degradation; 2-deoxy-D-ribose 1-phosphate degradation; D-glyceraldehyde 3-phosphate and acetaldehyde from 2-deoxy-alpha-D-ribose 1-phosphate: step 2/2. In terms of biological role, catalyzes a reversible aldol reaction between acetaldehyde and D-glyceraldehyde 3-phosphate to generate 2-deoxy-D-ribose 5-phosphate. This Klebsiella pneumoniae (strain 342) protein is Deoxyribose-phosphate aldolase.